The chain runs to 1040 residues: MGFTVVSRSGSPTRRENQKRRVCFRLLLRLLRRGFVVLSAESDPKMPNYSIRGINVEFPFEAYQSQIIYMDRVIESLQNKCHALLESPTGTGKTLCLLCATLAWRKSLGSFSTRKDRKNSAIPWSDSDEPLSQSGGGGGGAFPTIVYASRTHSQLRQVIKELKRSSYRPKMVVLGSREQLCVNEEVNSLRGKALTNACQYLCKKRGKRQCNHFNRLPDYLKHNPHIGDEPVDIEDLVNIGKDSGPCPYYITRELHKDVDIIFAPYNYLISNGYRKFLKVNWTNSVLIFDEAHNLESLCADSASFDLPSVLLSACISEAQECVQLAAARRDSLNDVSINPENFAILKGLLLKLQELISKVPIPKRDEGFTKPGPYIYEMLKSLNITHETAPKLIGTVEEAAVFLEEEKQRTATNAGSKLEIIADMLKLIFRENGSNHADVYRVHVQELEQNSTDVMKGKVSRTLSWWCFSPGITMLDIAQKGVGSIILTSGTLSPMDSLAQELKLDFPIRLENPHVISSNQLWAGVVSTGPSGYVLNSSYRNRDVPEYKQELGNAIVNFSRVVPEGLLIFFPSYYLMDSCITFWKNGCYRNSMTVWERICKLKKPVIEPKDSSLFPAAMRDFSEKLQDRATSGVVFFAVCRGKVSEGLDFADGAGRAVVITGLPYARVTDPRVKLKREFLDEQSQLADVKLPRSTLLSGSMWYSQEAARAVNQAIGRVIRHRHDYGAIIFCDDRFEQPSQQSKISLWIRPNVKCYSRYGEVISDLARFFRTERSNFPARLVTEQENNIVSTLLPVESIEDNPTPAFGNSNLKNVGVAQNELSRLEAFPPANRASPLERDGNNVKRNGLTILKHTGKIPRIVKGDVMQGCSSRKAKLVELSDDEETPVERRCEVVDLESDNCETQTCVTEVLASSTCLNTMGLKKKRKVPESQGSASSSVLTAKGNGGGDKKEASASAFLSQVKEKLNTEEYKKFIGYMQALKKKEIKLANVMQSIVQLFCGSERDHLLMGFKDFVPVKYRPAYEECIKTRKRQSIIFGNSN.

The 304-residue stretch at 52–355 (RGINVEFPFE…KGLLLKLQEL (304 aa)) folds into the Helicase ATP-binding domain. Residue 87-94 (SPTGTGKT) participates in ATP binding. The disordered stretch occupies residues 117–137 (RKNSAIPWSDSDEPLSQSGGG). Residues Cys181, Cys202, Cys210, and Cys246 each coordinate [4Fe-4S] cluster. The DEAH box motif lies at 289 to 292 (DEAH). The tract at residues 926 to 949 (KVPESQGSASSSVLTAKGNGGGDK) is disordered. Polar residues predominate over residues 930 to 939 (SQGSASSSVL). The short motif at 992–999 (QSIVQLFC) is the PIP-box; degenerate element.

It belongs to the helicase family. RAD3/XPD subfamily.

Its subcellular location is the nucleus. It carries out the reaction ATP + H2O = ADP + phosphate + H(+). Functionally, a probable ATP-dependent DNA helicase implicated in DNA replication, DNA repair and the maintenance of genomic stability. Acts as an anti-recombinase to counteract toxic recombination and limit crossover during meiosis. Regulates meiotic recombination and crossover homeostasis by physically dissociating strand invasion events and thereby promotes noncrossover repair by meiotic synthesis dependent strand annealing (SDSA) as well as disassembly of D loop recombination intermediates. Also plays a role in preserving the stability of 45S rDNA repeats. The protein is Regulator of telomere elongation helicase 1 homolog of Arabidopsis thaliana (Mouse-ear cress).